A 204-amino-acid polypeptide reads, in one-letter code: Thioredoxin-like 4, chloroplastic (204 aa).

The transit peptide at 1–27 directs the protein to the chloroplast; sequence MSSLLNISHCSYHGYSGLTSRGGINTV. Positions 63-201 constitute a Thioredoxin domain; that stretch reads AKSLSQENLV…IDAAILKYTS (139 aa). Catalysis depends on nucleophile residues C119 and C122. C119 and C122 are disulfide-bonded.

This sequence belongs to the thioredoxin family.

The protein resides in the plastid. The protein localises to the chloroplast. In terms of biological role, probable thiol-disulfide oxidoreductase that may participate in various redox reactions. The sequence is that of Thioredoxin-like 4, chloroplastic from Arabidopsis thaliana (Mouse-ear cress).